The primary structure comprises 282 residues: HTH-type transcriptional activator RhaR (282 aa).

In terms of domain architecture, HTH araC/xylS-type spans 179 to 277 (DKLITALANS…GMTPSQWRHL (99 aa)). DNA-binding regions (H-T-H motif) lie at residues 196 to 217 (DAFCQQEQCSERVLRQQFRAQT) and 244 to 267 (VSEISMQCGFEDSNYFSVVFTRET).

As to quaternary structure, binds DNA as a dimer.

It localises to the cytoplasm. Activates expression of the rhaSR operon in response to L-rhamnose. The chain is HTH-type transcriptional activator RhaR from Salmonella choleraesuis (strain SC-B67).